We begin with the raw amino-acid sequence, 215 residues long: Protein HP-25 homolog 2 (215 aa).

Positions 1–30 are cleaved as a signal peptide; the sequence is MPGRGGQSLSMVCVDVWILALSVLSVMADA. The interval 35–79 is disordered; it reads VTESCDSQGPPGLPGPPGLPGPPGPPGPPGPPGLRGPTGIPGDIE. The region spanning 43–76 is the Collagen-like domain; the sequence is GPPGLPGPPGLPGPPGPPGPPGPPGLRGPTGIPG. Over residues 45-68 the composition is skewed to pro residues; it reads PGLPGPPGLPGPPGPPGPPGPPGL. The 134-residue stretch at 82-215 folds into the C1q domain; that stretch reads LSPPKSAFAV…GYLLYGNYPG (134 aa).

The protein localises to the secreted. The sequence is that of Protein HP-25 homolog 2 from Bos taurus (Bovine).